The chain runs to 783 residues: Serine/threonine-protein kinase SIK1 (783 aa).

The Protein kinase domain maps to 27–278 (YDIERTLGKG…IAQIRQHRWM (252 aa)). Residues 33-41 (LGKGNFAVV) and Lys-56 contribute to the ATP site. Asp-149 (proton acceptor) is an active-site residue. Position 182 is a phosphothreonine; by LKB1 and GSK3-beta (Thr-182). At Ser-186 the chain carries Phosphoserine; by autocatalysis. A UBA domain is found at 303–343 (DYDEQALGIMQTLGVDRQRTVESLQNSSYNHFAAIYYLLLE). At Thr-322 the chain carries Phosphothreonine; by CaMK1. 2 disordered regions span residues 353–377 (CARP…VPQE) and 449–477 (RQGP…LAEV). Thr-473 is subject to Phosphothreonine; by PKA. Ser-575 carries the phosphoserine; by PKA modification. The tract at residues 583–612 (LKAFRQQLRKTTRTKGFLGLNKIKGLARQV) is RK-rich region; required for cAMP responsiveness and nuclear localization. Residues 619-643 (RASRGGLSPFHAPAQSPGLHGGAAG) are disordered.

The protein belongs to the protein kinase superfamily. CAMK Ser/Thr protein kinase family. AMPK subfamily. In terms of assembly, interacts with ATP1A1. Interacts (when phosphorylated on Thr-182 and Ser-186) with YWHAZ. Interacts (when phosphorylated at Thr-473 and/or Ser-575) with 14-3-3 proteins; the interaction inhibits kinase activity towards TORCs. There is a cooperative effect of the phosphorylation sites in 14-3-3 binding as the interaction is stronger when both Thr-473 and Ser-575 are modified. It depends on Mg(2+) as a cofactor. Post-translationally, phosphorylated at Thr-182 by STK11/LKB1 in complex with STE20-related adapter-alpha (STRADA) pseudo kinase and CAB39, leading to its activation. Phosphorylation at Thr-182 promotes autophosphorylation at Ser-186, which is required for sustained activity. Autophosphorylation at Ser-186 is maintained by sequential phosphorylation at Thr-182 by GSK3-beta. GSK3-beta cannot initiate phosphorylation at Thr-182, it can only maintain it. Phosphorylation at Ser-575 in response to cAMP signaling promotes translocation to the cytoplasm. Phosphorylation at Thr-322 by CaMK1 following intracellular sodium concentration leads to activation.

It localises to the cytoplasm. The protein resides in the nucleus. It catalyses the reaction L-seryl-[protein] + ATP = O-phospho-L-seryl-[protein] + ADP + H(+). The enzyme catalyses L-threonyl-[protein] + ATP = O-phospho-L-threonyl-[protein] + ADP + H(+). Its activity is regulated as follows. Activated by phosphorylation on Thr-182. Also activated by phosphorylation on Thr-322 in response to increases in intracellular sodium in parallel with elevations in intracellular calcium through the reversible sodium/calcium exchanger. Inhibited by phosphorylation at Thr-473 and Ser-575, probably by PKA, which triggers interaction with 14-3-3 proteins. Serine/threonine-protein kinase involved in various processes such as cell cycle regulation, gluconeogenesis and lipogenesis regulation, muscle growth and differentiation and tumor suppression. Phosphorylates HDAC4, HDAC5, PPME1, SREBF1, CRTC1/TORC1. Inhibits CREB activity by phosphorylating and inhibiting activity of TORCs, the CREB-specific coactivators, like CRTC2/TORC2 and CRTC3/TORC3 in response to cAMP signaling. Acts as a tumor suppressor and plays a key role in p53/TP53-dependent anoikis, a type of apoptosis triggered by cell detachment: required for phosphorylation of p53/TP53 in response to loss of adhesion and is able to suppress metastasis. Part of a sodium-sensing signaling network, probably by mediating phosphorylation of PPME1: following increases in intracellular sodium, SIK1 is activated by CaMK1 and phosphorylates PPME1 subunit of protein phosphatase 2A (PP2A), leading to dephosphorylation of sodium/potassium-transporting ATPase ATP1A1 and subsequent increase activity of ATP1A1. Acts as a regulator of muscle cells by phosphorylating and inhibiting class II histone deacetylases HDAC4 and HDAC5, leading to promote expression of MEF2 target genes in myocytes. Also required during cardiomyogenesis by regulating the exit of cardiomyoblasts from the cell cycle via down-regulation of CDKN1C/p57Kip2. Acts as a regulator of hepatic gluconeogenesis by phosphorylating and repressing the CREB-specific coactivators CRTC1/TORC1 and CRTC2/TORC2, leading to inhibit CREB activity. Also regulates hepatic lipogenesis by phosphorylating and inhibiting SREBF1. In concert with CRTC1/TORC1, regulates the light-induced entrainment of the circadian clock by attenuating PER1 induction; represses CREB-mediated transcription of PER1 by phosphorylating and deactivating CRTC1/TORC1. The protein is Serine/threonine-protein kinase SIK1 (SIK1) of Homo sapiens (Human).